Here is a 135-residue protein sequence, read N- to C-terminus: Protein Wnt-7b (135 aa).

2 disulfide bridges follow: cysteine 3-cysteine 17 and cysteine 5-cysteine 12. A lipid anchor (O-palmitoleoyl serine; by PORCN) is attached at serine 9. A disordered linker region spans residues 41 to 69 (VEVVRANRLRQPTFLKIKKVRSYQKPMET). Intrachain disulfides connect cysteine 81–cysteine 112, cysteine 97–cysteine 107, and cysteine 134–cysteine 135. Residue asparagine 98 is glycosylated (N-linked (GlcNAc...) asparagine).

This sequence belongs to the Wnt family. Post-translationally, palmitoleoylation is required for efficient binding to frizzled receptors. Depalmitoleoylation leads to Wnt signaling pathway inhibition. In adults, in brain and lung.

It localises to the secreted. The protein localises to the extracellular space. The protein resides in the extracellular matrix. In terms of biological role, ligand for members of the frizzled family of seven transmembrane receptors that functions in the canonical Wnt/beta-catenin signaling pathway. Required for normal fusion of the chorion and the allantois during placenta development. Required for central nervous system (CNS) angiogenesis and blood-brain barrier regulation. This chain is Protein Wnt-7b (wnt7b), found in Xenopus laevis (African clawed frog).